The chain runs to 375 residues: Type II restriction enzyme ApaLI (375 aa).

It carries out the reaction Endonucleolytic cleavage of DNA to give specific double-stranded fragments with terminal 5'-phosphates.. In terms of biological role, a subtype P restriction enzyme that recognizes the double-stranded sequence 5'-GTGCAC-3' and cleaves after G-1. This is Type II restriction enzyme ApaLI from Acetobacter pasteurianus (Acetobacter turbidans).